The sequence spans 119 residues: Protein yippee-like 3 (119 aa).

Residues R19–N116 enclose the Yippee domain. Zn(2+) contacts are provided by C23, C26, C79, and C82.

Belongs to the yippee family. Post-translationally, probably ubiquitinated leading to its degradation by the proteasome.

It localises to the nucleus. It is found in the nucleolus. Functionally, involved in proliferation and apoptosis in myeloid precursor cells. The protein is Protein yippee-like 3 (YPEL3) of Bos taurus (Bovine).